Reading from the N-terminus, the 337-residue chain is Transcription factor bHLH121 (337 aa).

In terms of domain architecture, bHLH spans 58 to 108 (ARKSQKAGREKLRREKLNEHFVELGNVLDPERPKNDKATILTDTVQLLKEL). Positions 235–337 (VHIPQNPGNR…AGGQKPDDAK (103 aa)) are disordered. 2 stretches are compositionally biased toward basic and acidic residues: residues 244–263 (RSRE…KAED) and 280–291 (SDKDTLQRPEKT). Residues 297–317 (NNNNNSIEESSHSSKCSSSPS) are compositionally biased toward low complexity.

Homodimer. Expressed constitutively in roots, leaves, stems, and flowers.

It localises to the nucleus. The protein is Transcription factor bHLH121 (BHLH121) of Arabidopsis thaliana (Mouse-ear cress).